Here is a 320-residue protein sequence, read N- to C-terminus: Acetyl-coenzyme A carboxylase carboxyl transferase subunit alpha (320 aa).

In terms of domain architecture, CoA carboxyltransferase C-terminal spans 33–294 (AFDGEIESLR…GDAVEEELKA (262 aa)).

The protein belongs to the AccA family. Acetyl-CoA carboxylase is a heterohexamer composed of biotin carboxyl carrier protein (AccB), biotin carboxylase (AccC) and two subunits each of ACCase subunit alpha (AccA) and ACCase subunit beta (AccD).

The protein resides in the cytoplasm. It carries out the reaction N(6)-carboxybiotinyl-L-lysyl-[protein] + acetyl-CoA = N(6)-biotinyl-L-lysyl-[protein] + malonyl-CoA. The protein operates within lipid metabolism; malonyl-CoA biosynthesis; malonyl-CoA from acetyl-CoA: step 1/1. Its function is as follows. Component of the acetyl coenzyme A carboxylase (ACC) complex. First, biotin carboxylase catalyzes the carboxylation of biotin on its carrier protein (BCCP) and then the CO(2) group is transferred by the carboxyltransferase to acetyl-CoA to form malonyl-CoA. The chain is Acetyl-coenzyme A carboxylase carboxyl transferase subunit alpha from Phenylobacterium zucineum (strain HLK1).